A 994-amino-acid polypeptide reads, in one-letter code: Transposase for transposon Tn2501 (994 aa).

This sequence belongs to the transposase 7 family.

In terms of biological role, required for transposition of transposon Tn2501. The chain is Transposase for transposon Tn2501 (tnpA) from Escherichia coli.